The chain runs to 155 residues: Protein SprT-like (155 aa).

The SprT-like domain maps to 7–145 (QQHMEEVSLQ…GSCGGRLKQT (139 aa)). Histidine 67 serves as a coordination point for Zn(2+). Glutamate 68 is a catalytic residue. Histidine 71 lines the Zn(2+) pocket.

The protein belongs to the SprT family. Zn(2+) serves as cofactor.

It is found in the cytoplasm. This Listeria innocua serovar 6a (strain ATCC BAA-680 / CLIP 11262) protein is Protein SprT-like.